A 213-amino-acid chain; its full sequence is Protein FAM156A/FAM156B (213 aa).

Met-1 carries the N-acetylmethionine modification. Positions 1–62 (MDPLQKRNPA…SQAVPLPEGL (62 aa)) are disordered. Residues 8–37 (NPASPSKSSPMTAAETSQEGPAPSQPSYSE) are compositionally biased toward polar residues. Ser-114 is modified (phosphoserine). A helical transmembrane segment spans residues 154-170 (WETLVQGLSGLTLSLGT). A disordered region spans residues 165–198 (TLSLGTNQPGPLPEAALQPQETEEKRQRERQQES). Basic and acidic residues predominate over residues 186–197 (TEEKRQRERQQE).

The protein localises to the membrane. The protein is Protein FAM156A/FAM156B (FAM156A) of Homo sapiens (Human).